The primary structure comprises 257 residues: Trans-aconitate 2-methyltransferase (257 aa).

This sequence belongs to the methyltransferase superfamily. Tam family.

The protein localises to the cytoplasm. The catalysed reaction is trans-aconitate + S-adenosyl-L-methionine = (E)-3-(methoxycarbonyl)pent-2-enedioate + S-adenosyl-L-homocysteine. Its function is as follows. Catalyzes the S-adenosylmethionine monomethyl esterification of trans-aconitate. In Sinorhizobium fredii (strain NBRC 101917 / NGR234), this protein is Trans-aconitate 2-methyltransferase.